Reading from the N-terminus, the 111-residue chain is Large ribosomal subunit protein uL23 (111 aa).

It belongs to the universal ribosomal protein uL23 family. As to quaternary structure, part of the 50S ribosomal subunit. Contacts protein L29, and trigger factor when it is bound to the ribosome.

Its function is as follows. One of the early assembly proteins it binds 23S rRNA. One of the proteins that surrounds the polypeptide exit tunnel on the outside of the ribosome. Forms the main docking site for trigger factor binding to the ribosome. This is Large ribosomal subunit protein uL23 from Chlamydia muridarum (strain MoPn / Nigg).